Here is a 366-residue protein sequence, read N- to C-terminus: Adenosine deaminase (366 aa).

Zn(2+)-binding residues include H19 and H21. H21, D23, and G181 together coordinate substrate. A Zn(2+)-binding site is contributed by H208. The active-site Proton donor is E211. D304 provides a ligand contact to Zn(2+).

This sequence belongs to the metallo-dependent hydrolases superfamily. Adenosine and AMP deaminases family. Adenosine deaminase subfamily. Requires Zn(2+) as cofactor.

It carries out the reaction adenosine + H2O + H(+) = inosine + NH4(+). The catalysed reaction is 2'-deoxyadenosine + H2O + H(+) = 2'-deoxyinosine + NH4(+). Its function is as follows. Catalyzes the hydrolytic deamination of adenosine and 2-deoxyadenosine. In Mycobacterium avium (strain 104), this protein is Adenosine deaminase.